A 403-amino-acid chain; its full sequence is Inhibitor of growth protein 3 (403 aa).

The interval 112 to 149 (DTPSQPVNNHHAHSHTPVEKRKYNPTSHHTTTDHIPEK) is disordered. Glycyl lysine isopeptide (Lys-Gly) (interchain with G-Cter in SUMO2) cross-links involve residues lysine 133, lysine 150, and lysine 152. Position 166 is an N6-acetyllysine (lysine 166). Lysine 241 participates in a covalent cross-link: Glycyl lysine isopeptide (Lys-Gly) (interchain with G-Cter in SUMO2). The residue at position 249 (lysine 249) is an N6-acetyllysine. The tract at residues 271-310 (TQNASSSAADSRSGRKSKNNNKSSSQQSSSSSSSSSLSSC) is disordered. Low complexity predominate over residues 290 to 310 (NNKSSSQQSSSSSSSSSLSSC). The segment at 345–394 (PRYCICNQVSYGEMVGCDNQDCPIEWFHYGCVGLTEAPKGKWYCPQCTAA) adopts a PHD-type zinc-finger fold. 8 residues coordinate Zn(2+): cysteine 348, cysteine 350, cysteine 361, cysteine 366, histidine 372, cysteine 375, cysteine 388, and cysteine 391.

This sequence belongs to the ING family. Interacts with H3K4me3 and to a lesser extent with H3K4me2. Component of the NuA4 histone acetyltransferase complex which contains the catalytic subunit KAT5/TIP60 and the subunits EP400, TRRAP/PAF400, BRD8/SMAP, EPC1, DMAP1/DNMAP1, RUVBL1/TIP49, RUVBL2, ING3, actin, ACTL6A/BAF53A, MORF4L1/MRG15, MORF4L2/MRGX, MRGBP, YEATS4/GAS41, VPS72/YL1 and MEAF6. The NuA4 complex interacts with MYC. HTATTIP/TIP60, EPC1, and ING3 together constitute a minimal HAT complex termed Piccolo NuA4. Component of a SWR1-like complex.

Its subcellular location is the nucleus. Its function is as follows. Component of the NuA4 histone acetyltransferase (HAT) complex which is involved in transcriptional activation of select genes principally by acetylation of nucleosomal histones H4 and H2A. This modification may both alter nucleosome - DNA interactions and promote interaction of the modified histones with other proteins which positively regulate transcription. This complex may be required for the activation of transcriptional programs associated with oncogene and proto-oncogene mediated growth induction, tumor suppressor mediated growth arrest and replicative senescence, apoptosis, and DNA repair. NuA4 may also play a direct role in DNA repair when directly recruited to sites of DNA damage. Component of a SWR1-like complex that specifically mediates the removal of histone H2A.Z/H2AZ1 from the nucleosome. The chain is Inhibitor of growth protein 3 (ING3) from Pongo abelii (Sumatran orangutan).